The sequence spans 217 residues: Translation initiation factor IF-3 (217 aa).

A disordered region spans residues 179 to 217; the sequence is PRKTPLVKKEEKEAAPTKAVRTIPAPPRPTAAKVAAQQA.

It belongs to the IF-3 family. In terms of assembly, monomer.

It localises to the cytoplasm. IF-3 binds to the 30S ribosomal subunit and shifts the equilibrium between 70S ribosomes and their 50S and 30S subunits in favor of the free subunits, thus enhancing the availability of 30S subunits on which protein synthesis initiation begins. The chain is Translation initiation factor IF-3 from Parasynechococcus marenigrum (strain WH8102).